A 1377-amino-acid polypeptide reads, in one-letter code: Dicer-like protein 2 (1377 aa).

Residues 23–203 (MFEASLKENI…MKTLESNLDS (181 aa)) enclose the Helicase ATP-binding domain. 36–43 (MDTGTGKT) is an ATP binding site. The DEAH box motif lies at 144–147 (DEAH). The region spanning 368-531 (ALINFLDKFD…AYQDEERRLR (164 aa)) is the Helicase C-terminal domain. Residues 561-655 (VVTHLYHFCA…LPLTKNPEMR (95 aa)) enclose the Dicer dsRNA-binding fold domain. RNase III domains follow at residues 914–1052 (RLCA…LDGG) and 1092–1275 (DGDL…VDSG). Mg(2+) is bound by residues Glu-1131, Asp-1261, and Glu-1264.

This sequence belongs to the helicase family. Dicer subfamily. Mg(2+) is required as a cofactor. Mn(2+) serves as cofactor.

Functionally, dicer-like endonuclease involved in cleaving double-stranded RNA in the RNA interference (RNAi) pathway. Produces 21 to 25 bp dsRNAs (siRNAs) which target the selective destruction of homologous RNAs leading to sequence-specific suppression of gene expression, called post-transcriptional gene silencing (PTGS). Part of a broad host defense response against viral infection and transposons. This Aspergillus oryzae (strain ATCC 42149 / RIB 40) (Yellow koji mold) protein is Dicer-like protein 2 (dcl2).